The chain runs to 123 residues: MKTKLGFNRLSRKSSHRRALLKNMVISFFKHEKISSTKTKLFEVKRFAERLITRAKVDTVHNRRELSKFIHDKHILNKLFTKISPVFRQRSGGYTRMIKLGKRYGDAAEMAILELVEKPLKVE.

The protein belongs to the bacterial ribosomal protein bL17 family. In terms of assembly, part of the 50S ribosomal subunit. Contacts protein L32.

The chain is Large ribosomal subunit protein bL17 from Borreliella burgdorferi (strain ATCC 35210 / DSM 4680 / CIP 102532 / B31) (Borrelia burgdorferi).